Here is a 216-residue protein sequence, read N- to C-terminus: Ras-related protein RABE1d (216 aa).

Residue 22-29 (GDSGVGKS) coordinates GTP. The Effector region signature appears at 44-52 (FITTIGIDF). GTP contacts are provided by residues 70–74 (DTAGQ), 128–131 (NKAD), and 159–160 (SA). The segment at 196-216 (TKQDTAASSSTAEKSACCSYV) is disordered. A compositionally biased stretch (low complexity) spans 200–216 (TAASSSTAEKSACCSYV). 2 S-geranylgeranyl cysteine lipidation sites follow: C212 and C213.

This sequence belongs to the small GTPase superfamily. Rab family. As to quaternary structure, interacts with PI5K2.

It localises to the golgi apparatus membrane. The protein localises to the cell membrane. Its function is as follows. Involved in membrane trafficking from the Golgi to the plasma membrane. In Arabidopsis thaliana (Mouse-ear cress), this protein is Ras-related protein RABE1d (RABE1D).